A 341-amino-acid polypeptide reads, in one-letter code: Pyrophosphate--fructose 6-phosphate 1-phosphotransferase (341 aa).

G10 is a diphosphate binding site. E103 is a binding site for Mg(2+). Substrate contacts are provided by residues 125–127, R162, 169–171, E221, R265, and 271–274; these read TID, MGR, and HTQR. The active-site Proton acceptor is D127.

It belongs to the phosphofructokinase type A (PFKA) family. Mixed-substrate PFK group III subfamily. Homotetramer. Mg(2+) serves as cofactor.

It is found in the cytoplasm. It catalyses the reaction beta-D-fructose 6-phosphate + diphosphate = beta-D-fructose 1,6-bisphosphate + phosphate + H(+). It functions in the pathway carbohydrate degradation; glycolysis; D-glyceraldehyde 3-phosphate and glycerone phosphate from D-glucose: step 3/4. Non-allosteric. Its function is as follows. Catalyzes the phosphorylation of D-fructose 6-phosphate, the first committing step of glycolysis. Uses inorganic phosphate (PPi) as phosphoryl donor instead of ATP like common ATP-dependent phosphofructokinases (ATP-PFKs), which renders the reaction reversible, and can thus function both in glycolysis and gluconeogenesis. Consistently, PPi-PFK can replace the enzymes of both the forward (ATP-PFK) and reverse (fructose-bisphosphatase (FBPase)) reactions. The protein is Pyrophosphate--fructose 6-phosphate 1-phosphotransferase of Amycolatopsis methanolica.